The sequence spans 574 residues: MALKGRALYDFHSENKEEISIQQDEELVIFSETSLDGWLQGQNSRGETGLFPASYVEIVRPGISTNHVDYSNSPAGSLGTQGSLYSSPSMASPARSGGGSGFLSNPGSFEDDDDDDWDDWDDGCTVVEEPLAGGLGTNGHPPLNLSYPGAYPNQHMAFRPKAPLERQDSLASAKRGSVVGRNLNRFSCFVRSGVEAFILGDVPMMAKIAETYSIEMGPRGPQWKANPHPFACSIEDPTKQTKFKGIKSYISYKLTPTHAGSPVYRRYKHFDWLYNRLLHKFTVISVPHLPEKQATGRFEEDFIEKRKRRLILWMDHMTSHPVLSQYEGFQHFLSCLDDKQWKMGKRRAEKDEMVGASFLLTFQIPTEHQDLQDVEDRVDTFKAFSKKMDDSVLQLSNVAAELVRKHVGGFRKEFQKLGSAFQAISHAFQMDPPFRSDALNNAISHTGRTYETVGEMFAEQPKHDLFQMLDTLSLYQGLLSNFPDIIHLQKGAFAKVKESQRMSDEGRMAQEEADGIRRRCRVVGFALQAEMNHFHQRRELDFKHMMQSYLRQQILFYQRVGQQLEKTLHMYDHL.

Residues 1–61 form the SH3 domain; sequence MALKGRALYD…PASYVEIVRP (61 aa). At S77 the chain carries Phosphoserine. The segment covering 79–90 has biased composition (polar residues); the sequence is GTQGSLYSSPSM. The interval 79–116 is disordered; that stretch reads GTQGSLYSSPSMASPARSGGGSGFLSNPGSFEDDDDDD. S92 is modified (phosphoserine). A PX domain is found at 230 to 340; the sequence is FACSIEDPTK…HFLSCLDDKQ (111 aa). The 204-residue stretch at 371–574 folds into the BAR domain; sequence LQDVEDRVDT…EKTLHMYDHL (204 aa).

This sequence belongs to the sorting nexin family. As to quaternary structure, homodimer (via BAR domain). Interacts with ADAM15. Interacts with FASLG. Interacts (via SH3 domain) with DNM1 and DNM2. Interacts with WASL. Interacts with FCHSD1 (via the F-BAR domain). Phosphorylated. As to expression, detected in brain (at protein level).

The protein resides in the cytoplasm. Its subcellular location is the cytosol. It localises to the membrane. The protein localises to the cytoplasmic vesicle membrane. In terms of biological role, plays a role in the reorganization of the cytoskeleton, endocytosis and cellular vesicle trafficking via its interactions with membranes, WASL, DNM1 and DNM2. Acts both during interphase and at the end of mitotic cell divisions. Required for efficient progress through mitosis and cytokinesis. Required for normal formation of the cleavage furrow at the end of mitosis. Modulates endocytosis of cell-surface proteins, such as APP and PRNP; this then modulates the secretion of APP and PRNP peptides. Promotes membrane tubulation (in vitro). May promote the formation of macropinosomes. In Mus musculus (Mouse), this protein is Sorting nexin-33 (Snx33).